We begin with the raw amino-acid sequence, 250 residues long: Cobalt transport protein CbiM (250 aa).

The signal sequence occupies residues 1 to 25; sequence MKQNIKLGVIAALMLIVLTPVTSNA. 6 helical membrane-spanning segments follow: residues 33-53, 68-88, 100-120, 132-152, 163-183, and 205-225; these read LPVKWSIAWGVIFIPFFLVGL, VLLALCGAFVFVLSALKIPSV, LGAIMFGPSVMFVLGTIVLIF, TLGANAFSMAIIGPIISFLIF, AMPVFLAAAIGDLATYTVTSI, and GIFFMTQIPIAIAEGILTVIV.

It belongs to the CbiM family. As to quaternary structure, forms an energy-coupling factor (ECF) transporter complex composed of an ATP-binding protein (A component, CbiO), a transmembrane protein (T component, CbiQ) and 2 possible substrate-capture proteins (S components, CbiM and CbiN) of unknown stoichimetry.

It localises to the cell membrane. It functions in the pathway cofactor biosynthesis; adenosylcobalamin biosynthesis. In terms of biological role, part of the energy-coupling factor (ECF) transporter complex CbiMNOQ involved in cobalt import. The polypeptide is Cobalt transport protein CbiM (Clostridioides difficile (strain R20291) (Peptoclostridium difficile)).